Reading from the N-terminus, the 284-residue chain is Urease accessory protein UreD (284 aa).

The disordered stretch occupies residues 1-28 (MQSEQQAIGASGCEDAQQPVRQQRARGR).

Belongs to the UreD family. As to quaternary structure, ureD, UreF and UreG form a complex that acts as a GTP-hydrolysis-dependent molecular chaperone, activating the urease apoprotein by helping to assemble the nickel containing metallocenter of UreC. The UreE protein probably delivers the nickel.

Its subcellular location is the cytoplasm. Functionally, required for maturation of urease via the functional incorporation of the urease nickel metallocenter. This chain is Urease accessory protein UreD, found in Agrobacterium fabrum (strain C58 / ATCC 33970) (Agrobacterium tumefaciens (strain C58)).